Consider the following 191-residue polypeptide: Transcription factor HES-2 (191 aa).

Residues 1 to 26 form a disordered region; sequence MAPNVALADSMHNYQPKPGKRNQEAS. One can recognise a bHLH domain in the interval 28–85; the sequence is LRKTLKPLMEKRRRARINESLNQLKTLILPLIGKDNSRYSKLEKADILEMTVRFLRDI. Positions 97–130 constitute an Orange domain; the sequence is YKEGYRACVERLSAILGKSHVLTGEASNRLLEYL. 2 stretches are compositionally biased toward polar residues: residues 159–173 and 182–191; these read RTSQ…QPSS and QLNSSIWRPW. Positions 159–191 are disordered; it reads RTSQFGSPLQNQPSSHRPAPCPPQLNSSIWRPW. A WRPW motif motif is present at residues 188-191; sequence WRPW.

Transcription repression requires formation of a complex with a corepressor protein of the Groucho/TLE family. Homodimer, and heterodimer with the other bHLH proteins neurod1, neurod4/ath3, hes1/hairy1 and hes6r. Weakly interacts with the bHLH protein hey1/hrt1. Expressed in the animal half of the early cleavage stage embryo. During neurulation and organogenesis, the otic vesicles and retina are the main sites of expression; expression in otic placodes begins as early as stage 13.5, persisting in the otic vesicles at stage 30 and beyond. Also transiently expressed in the olfactory placodes. In addition, weakly expressed in primary neurons. Expression in the retina begins at stage 21, and is seen throughout the neural retina by stage 30. From stage 35 onwards, expression progressively declines in the central retina, while remaining high in the margins. At stage 41, expression becomes restricted to the ciliary marginal zone (CMZ) of the retina, the only region where retinogenesis is still occurring.

The protein localises to the nucleus. Transcriptional repressor. Essential in the retina to govern glial versus neuronal differentiation. Promotes gliogenesis through the inhibition of neuronal differentiation by at least two distinct mechanisms; represses proneural gene transcription, and also physically interacts with proneural proteins, including neurod1. This is Transcription factor HES-2 (hes2) from Xenopus laevis (African clawed frog).